Consider the following 86-residue polypeptide: Co-chaperonin GroES (86 aa).

The protein belongs to the GroES chaperonin family. In terms of assembly, heptamer of 7 subunits arranged in a ring. Interacts with the chaperonin GroEL.

It is found in the cytoplasm. Its function is as follows. Together with the chaperonin GroEL, plays an essential role in assisting protein folding. The GroEL-GroES system forms a nano-cage that allows encapsulation of the non-native substrate proteins and provides a physical environment optimized to promote and accelerate protein folding. GroES binds to the apical surface of the GroEL ring, thereby capping the opening of the GroEL channel. The sequence is that of Co-chaperonin GroES from Campylobacter curvus (strain 525.92).